Here is a 131-residue protein sequence, read N- to C-terminus: MLIGVGTDIVQISRIEKILHLYPELFAKKILTSKELKQFALLGKINHAAFLAKRFAAKEAVSKAFGVGIGQGINFKDITILNNDLGKPIVEVSSNYTNKLSPFNIHLSLADDYPVCVAFAVIESSYNVIRG.

Mg(2+) contacts are provided by aspartate 8 and glutamate 59.

The protein belongs to the P-Pant transferase superfamily. AcpS family. Mg(2+) is required as a cofactor.

The protein localises to the cytoplasm. It carries out the reaction apo-[ACP] + CoA = holo-[ACP] + adenosine 3',5'-bisphosphate + H(+). Its function is as follows. Transfers the 4'-phosphopantetheine moiety from coenzyme A to a Ser of acyl-carrier-protein. This chain is Holo-[acyl-carrier-protein] synthase, found in Rickettsia rickettsii (strain Sheila Smith).